A 245-amino-acid polypeptide reads, in one-letter code: 5'-nucleotidase SurE (245 aa).

Positions 8, 9, 39, and 91 each coordinate a divalent metal cation.

This sequence belongs to the SurE nucleotidase family. It depends on a divalent metal cation as a cofactor.

It is found in the cytoplasm. The catalysed reaction is a ribonucleoside 5'-phosphate + H2O = a ribonucleoside + phosphate. Its function is as follows. Nucleotidase that shows phosphatase activity on nucleoside 5'-monophosphates. This chain is 5'-nucleotidase SurE, found in Herminiimonas arsenicoxydans.